Reading from the N-terminus, the 213-residue chain is High frequency lysogenization protein HflD homolog (213 aa).

Residues 79-126 (QGLNAELTRYTLSLMVLERKLSSAKGALDTLGNRINGLQRQLEHFDLQ) are a coiled coil.

The protein belongs to the HflD family.

The protein localises to the cytoplasm. It is found in the cell inner membrane. This Shigella flexneri serotype 5b (strain 8401) protein is High frequency lysogenization protein HflD homolog.